Consider the following 315-residue polypeptide: Putative 2-hydroxyacid dehydrogenase HI_1556 (315 aa).

NAD(+) is bound by residues T73, C156–L157, T231–R233, and D257. R233 is an active-site residue. E262 is a catalytic residue. H285 functions as the Proton donor in the catalytic mechanism. H285–W288 serves as a coordination point for NAD(+).

Belongs to the D-isomer specific 2-hydroxyacid dehydrogenase family.

This is Putative 2-hydroxyacid dehydrogenase HI_1556 from Haemophilus influenzae (strain ATCC 51907 / DSM 11121 / KW20 / Rd).